A 607-amino-acid chain; its full sequence is Condensin-2 complex subunit H2 (607 aa).

Thr19 is subject to Phosphothreonine. Residues Ser95, Ser231, Ser235, and Ser252 each carry the phosphoserine modification. Disordered stretches follow at residues 211–312 (YPMS…WQSL) and 325–347 (KGKP…KRKG). A compositionally biased stretch (acidic residues) spans 254–263 (GEEDAEDGAE). Ser494 carries the post-translational modification Phosphoserine.

Belongs to the CND2 H2 (condensin-2 subunit 2) family. As to quaternary structure, component of the condensin-2 complex, which contains the SMC2 and SMC4 heterodimer, and three non SMC subunits, NCAPG2, NCAPH2 and NCAPD3 that probably regulate the complex.

It is found in the nucleus. Regulatory subunit of the condensin-2 complex, a complex that seems to provide chromosomes with an additional level of organization and rigidity and in establishing mitotic chromosome architecture. May promote the resolution of double-strand DNA catenanes (intertwines) between sister chromatids. Condensin-mediated compaction likely increases tension in catenated sister chromatids, providing directionality for type II topoisomerase-mediated strand exchanges toward chromatid decatenation. Required for decatenation of chromatin bridges at anaphase. Early in neurogenesis, may play an essential role to ensure accurate mitotic chromosome condensation in neuron stem cells, ultimately affecting neuron pool and cortex size. Seems to have lineage-specific role in T-cell development. The polypeptide is Condensin-2 complex subunit H2 (Mus musculus (Mouse)).